Consider the following 227-residue polypeptide: Homeobox protein HD-10 (227 aa).

Positions 30–89 (FVKHRKRTTKAQLKVLEETFETNIRPDANMRKKLGEQLGMTPRSVQVWFQNRRAKIKKLT) form a DNA-binding region, homeobox. Residues 88–115 (LTQKKMMQQENTDNTKGPDAAHGSSSPK) are disordered. A compositionally biased stretch (polar residues) spans 92–102 (KMMQQENTDNT).

The protein localises to the nucleus. This chain is Homeobox protein HD-10 (HD-10), found in Encephalitozoon cuniculi (strain GB-M1) (Microsporidian parasite).